Consider the following 316-residue polypeptide: Very-long-chain 3-oxooacyl-coA reductase let-767 (316 aa).

NADP(+) is bound by residues 52-80 (ITGA…VSRT) and Asp106. Ser189 is a binding site for substrate. Residue Tyr202 is the Proton acceptor of the active site. An NADP(+)-binding site is contributed by Lys206.

The protein belongs to the short-chain dehydrogenases/reductases (SDR) family. 17-beta-HSD 3 subfamily.

It catalyses the reaction a very-long-chain (3R)-3-hydroxyacyl-CoA + NADP(+) = a very-long-chain 3-oxoacyl-CoA + NADPH + H(+). It participates in lipid metabolism; fatty acid biosynthesis. Required for branched chain fatty acid synthesis. Catalyzes the reduction of the 3-ketoacyl-CoA intermediate that is formed in each cycle of fatty acid elongation. Very long-chain fatty acids (VLCFAs) serve as precursors for ceramide and sphingolipids. May also be required for sterol hormone production. This Caenorhabditis briggsae protein is Very-long-chain 3-oxooacyl-coA reductase let-767.